We begin with the raw amino-acid sequence, 184 residues long: Antigen Sm21.7 (184 aa).

The EF-hand domain maps to 37–72; the sequence is LDMKQVNEWIALFDVDKDQKITFEEFCRGLGLKQNE. The Ca(2+) site is built by Asp50, Asp52, Asp54, Lys56, and Glu61.

This is Antigen Sm21.7 (SM21.7) from Schistosoma mansoni (Blood fluke).